Consider the following 255-residue polypeptide: Ribonuclease HII (255 aa).

The 186-residue stretch at 70–255 folds into the RNase H type-2 domain; that stretch reads EYIAGVDEVG…FEPVKKILLK (186 aa). Positions 76, 77, and 168 each coordinate a divalent metal cation.

It belongs to the RNase HII family. Mn(2+) is required as a cofactor. The cofactor is Mg(2+).

The protein localises to the cytoplasm. It carries out the reaction Endonucleolytic cleavage to 5'-phosphomonoester.. Functionally, endonuclease that specifically degrades the RNA of RNA-DNA hybrids. The polypeptide is Ribonuclease HII (Ligilactobacillus salivarius (strain UCC118) (Lactobacillus salivarius)).